The following is a 277-amino-acid chain: 4-hydroxy-tetrahydrodipicolinate reductase (277 aa).

NAD(+) contacts are provided by residues 11-16 (GALGRM) and 110-112 (GTT). Catalysis depends on histidine 166, which acts as the Proton donor/acceptor. Histidine 167 is a (S)-2,3,4,5-tetrahydrodipicolinate binding site. The active-site Proton donor is lysine 170. 176-177 (GT) lines the (S)-2,3,4,5-tetrahydrodipicolinate pocket.

It belongs to the DapB family.

The protein resides in the cytoplasm. It carries out the reaction (S)-2,3,4,5-tetrahydrodipicolinate + NAD(+) + H2O = (2S,4S)-4-hydroxy-2,3,4,5-tetrahydrodipicolinate + NADH + H(+). It catalyses the reaction (S)-2,3,4,5-tetrahydrodipicolinate + NADP(+) + H2O = (2S,4S)-4-hydroxy-2,3,4,5-tetrahydrodipicolinate + NADPH + H(+). Its pathway is amino-acid biosynthesis; L-lysine biosynthesis via DAP pathway; (S)-tetrahydrodipicolinate from L-aspartate: step 4/4. Catalyzes the conversion of 4-hydroxy-tetrahydrodipicolinate (HTPA) to tetrahydrodipicolinate. The chain is 4-hydroxy-tetrahydrodipicolinate reductase from Synechococcus sp. (strain CC9902).